Reading from the N-terminus, the 349-residue chain is Protein POOR HOMOLOGOUS SYNAPSIS 1 (349 aa).

Its subcellular location is the cytoplasm. Required for accurate chromosome segregation in meiosis. Required for pairing to occur between homologous chromosomes. Acts in early recombination steps and ensures pairing fidelity and proper repair of meiotic DNA double-strand-breaks. Regulates recombination and pairing of homologous chromosomes during meiotic prophase by controlling transport of RAD50 from cytoplasm to the nucleus. May affect pairing of the gene-rich fraction of the genome rather than preventing pairing between repetitive DNA elements. The polypeptide is Protein POOR HOMOLOGOUS SYNAPSIS 1 (Arabidopsis thaliana (Mouse-ear cress)).